A 525-amino-acid chain; its full sequence is ATP synthase subunit alpha (525 aa).

171–178 contributes to the ATP binding site; it reads GDRQTGKS.

This sequence belongs to the ATPase alpha/beta chains family. As to quaternary structure, F-type ATPases have 2 components, CF(1) - the catalytic core - and CF(0) - the membrane proton channel. CF(1) has five subunits: alpha(3), beta(3), gamma(1), delta(1), epsilon(1). CF(0) has three main subunits: a(1), b(2) and c(9-12). The alpha and beta chains form an alternating ring which encloses part of the gamma chain. CF(1) is attached to CF(0) by a central stalk formed by the gamma and epsilon chains, while a peripheral stalk is formed by the delta and b chains.

The protein resides in the cell inner membrane. The catalysed reaction is ATP + H2O + 4 H(+)(in) = ADP + phosphate + 5 H(+)(out). Produces ATP from ADP in the presence of a proton gradient across the membrane. The alpha chain is a regulatory subunit. The chain is ATP synthase subunit alpha from Flavobacterium psychrophilum (strain ATCC 49511 / DSM 21280 / CIP 103535 / JIP02/86).